The chain runs to 4699 residues: Fat-like cadherin-related tumor suppressor homolog (4699 aa).

A signal peptide spans methionine 1–serine 38. Residues lysine 39–glycine 4285 lie on the Extracellular side of the membrane. Cadherin domains lie at serine 63 to phenylalanine 183, tyrosine 184 to isoleucine 291, alanine 288 to phenylalanine 400, threonine 401 to phenylalanine 507, glutamate 508 to phenylalanine 613, glutamate 614 to leucine 716, valine 773 to isoleucine 877, glutamine 878 to phenylalanine 980, glycine 981 to phenylalanine 1088, aspartate 1089 to tyrosine 1198, aspartate 1194 to phenylalanine 1299, aspartate 1300 to isoleucine 1405, lysine 1408 to phenylalanine 1506, alanine 1507 to phenylalanine 1612, threonine 1613 to phenylalanine 1717, proline 1718 to phenylalanine 1815, valine 1816 to phenylalanine 1932, asparagine 1933 to phenylalanine 2033, glutamine 2034 to phenylalanine 2140, valine 2141 to phenylalanine 2241, glutamate 2242 to isoleucine 2341, glutamate 2342 to phenylalanine 2449, valine 2450 to phenylalanine 2551, aspartate 2552 to phenylalanine 2654, leucine 2655 to phenylalanine 2763, glutamate 2764 to phenylalanine 2860, aspartate 2861 to phenylalanine 2967, lysine 2968 to tyrosine 3072, leucine 3068 to phenylalanine 3169, serine 3170 to phenylalanine 3273, serine 3274 to phenylalanine 3378, leucine 3379 to phenylalanine 3483, serine 3484 to valine 3588, and threonine 3589 to phenylalanine 3696. N-linked (GlcNAc...) asparagine glycosylation is found at asparagine 68 and asparagine 159. The N-linked (GlcNAc...) asparagine glycan is linked to asparagine 367. Asparagine 782, asparagine 846, and asparagine 926 each carry an N-linked (GlcNAc...) asparagine glycan. 6 N-linked (GlcNAc...) asparagine glycosylation sites follow: asparagine 1109, asparagine 1201, asparagine 1315, asparagine 1442, asparagine 1476, and asparagine 1514. 19 disulfides stabilise this stretch: cysteine 3807–cysteine 3819, cysteine 3814–cysteine 3851, cysteine 3853–cysteine 3862, cysteine 3869–cysteine 3880, cysteine 3874–cysteine 3891, cysteine 3893–cysteine 3902, cysteine 4071–cysteine 4105, cysteine 4117–cysteine 4128, cysteine 4122–cysteine 4138, cysteine 4140–cysteine 4149, cysteine 4156–cysteine 4167, cysteine 4161–cysteine 4177, cysteine 4179–cysteine 4188, cysteine 4194–cysteine 4205, cysteine 4199–cysteine 4214, cysteine 4216–cysteine 4224, cysteine 4231–cysteine 4242, cysteine 4236–cysteine 4251, and cysteine 4253–cysteine 4262. The EGF-like 1 domain occupies threonine 3865 to glutamate 3903. In terms of domain architecture, Laminin G-like spans alanine 3921–cysteine 4105. EGF-like domains follow at residues arginine 4113–glutamate 4150, aspartate 4152–glutamate 4189, tyrosine 4190–glutamate 4225, and aspartate 4227–glycine 4263. A helical transmembrane segment spans residues isoleucine 4286 to leucine 4306. Residues lysine 4307 to asparagine 4699 are Cytoplasmic-facing.

As to expression, localizes where basal actin filaments terminate.

The protein localises to the cell membrane. Functionally, required for the planar polarity of actin filament orientation at the basal side of ovarian follicle cells. Required for proper egg chamber shape and elongation of the egg chamber during oogenesis. Required for the correct planar polarization of Rab10 within the basal follicle cell epithelium and is therefore indirectly involved in the Rab10-dependent remodeling of the basal membrane during egg chamber elongation. This is Fat-like cadherin-related tumor suppressor homolog (kug) from Drosophila melanogaster (Fruit fly).